Here is a 391-residue protein sequence, read N- to C-terminus: Transaldolase (391 aa).

The interval 1 to 329 (MGKNLLEQLR…RLKVLDGQEH (329 aa)) is transaldolase. K136 serves as the catalytic Schiff-base intermediate with substrate. 2 EF-hand domains span residues 329 to 364 (HIKHGAEEIFHAYDLDGDGFITREEWAGTDVVFDAL) and 365 to 387 (DRDHDGKITAAEMSAGLGAAFRL). The Ca(2+) site is built by D342, D344, D346, E353, D365, D367, D369, K371, and E376.

This sequence belongs to the transaldolase family. Type 1 subfamily.

The protein resides in the cytoplasm. The enzyme catalyses D-sedoheptulose 7-phosphate + D-glyceraldehyde 3-phosphate = D-erythrose 4-phosphate + beta-D-fructose 6-phosphate. It participates in carbohydrate degradation; pentose phosphate pathway; D-glyceraldehyde 3-phosphate and beta-D-fructose 6-phosphate from D-ribose 5-phosphate and D-xylulose 5-phosphate (non-oxidative stage): step 2/3. Its function is as follows. Transaldolase is important for the balance of metabolites in the pentose-phosphate pathway. This chain is Transaldolase, found in Synechocystis sp. (strain ATCC 27184 / PCC 6803 / Kazusa).